The sequence spans 453 residues: uncharacterized protein (453 aa).

Cys74, Cys80, Cys83, and Cys162 together coordinate [4Fe-4S] cluster. The S-adenosyl-L-methionine site is built by Gln286, Tyr315, Glu336, and Asp384. The active-site Nucleophile is the Cys411.

This sequence belongs to the class I-like SAM-binding methyltransferase superfamily. RNA M5U methyltransferase family.

This is an uncharacterized protein from Staphylococcus aureus (strain MRSA252).